Here is a 487-residue protein sequence, read N- to C-terminus: 3-octaprenyl-4-hydroxybenzoate carboxy-lyase (487 aa).

Asparagine 172 is a Mn(2+) binding site. Residues 175 to 177 (IYR), 189 to 191 (RWL), and 194 to 195 (RG) contribute to the prenylated FMN site. Glutamate 238 provides a ligand contact to Mn(2+). The Proton donor role is filled by aspartate 287.

This sequence belongs to the UbiD family. Homohexamer. The cofactor is prenylated FMN. Mn(2+) serves as cofactor.

Its subcellular location is the cell membrane. It carries out the reaction a 4-hydroxy-3-(all-trans-polyprenyl)benzoate + H(+) = a 2-(all-trans-polyprenyl)phenol + CO2. It functions in the pathway cofactor biosynthesis; ubiquinone biosynthesis. Catalyzes the decarboxylation of 3-octaprenyl-4-hydroxy benzoate to 2-octaprenylphenol, an intermediate step in ubiquinone biosynthesis. In Actinobacillus pleuropneumoniae serotype 3 (strain JL03), this protein is 3-octaprenyl-4-hydroxybenzoate carboxy-lyase.